Here is a 629-residue protein sequence, read N- to C-terminus: Probable potassium transport system protein Kup 3 (629 aa).

12 helical membrane passes run 20–40 (LSLSALGIVYGDIGTSPLYTF), 61–81 (VSLIIWTLIIIASVKYIHFAL), 106–126 (PFIIAVGLMGAALIYGDGTIT), 143–163 (PSLKYYVLPIAITILITLFAI), 171–191 (IGKAFGPVMAFWFLTIGILGA), 209–229 (GLSFLFSNGATGFFILCGVFL), 253–273 (WFGLAFPSLIFNYLGQAALVL), 291–311 (FLLPLIILSTVATIIASQAII), 343–363 (IYIGVVNWLLMLATLGLTIGF), 372–392 (AYGIAVSATMLCTTLLLFIAL), 400–420 (IITSGLVAGLFMIVDASFFAA), and 425–445 (FINGGYIPITLAIIIYSMMYI).

This sequence belongs to the HAK/KUP transporter (TC 2.A.72) family.

Its subcellular location is the cell inner membrane. The catalysed reaction is K(+)(in) + H(+)(in) = K(+)(out) + H(+)(out). Transport of potassium into the cell. Likely operates as a K(+):H(+) symporter. The protein is Probable potassium transport system protein Kup 3 of Legionella pneumophila subsp. pneumophila (strain Philadelphia 1 / ATCC 33152 / DSM 7513).